A 163-amino-acid chain; its full sequence is SsrA-binding protein (163 aa).

Belongs to the SmpB family.

The protein resides in the cytoplasm. Functionally, required for rescue of stalled ribosomes mediated by trans-translation. Binds to transfer-messenger RNA (tmRNA), required for stable association of tmRNA with ribosomes. tmRNA and SmpB together mimic tRNA shape, replacing the anticodon stem-loop with SmpB. tmRNA is encoded by the ssrA gene; the 2 termini fold to resemble tRNA(Ala) and it encodes a 'tag peptide', a short internal open reading frame. During trans-translation Ala-aminoacylated tmRNA acts like a tRNA, entering the A-site of stalled ribosomes, displacing the stalled mRNA. The ribosome then switches to translate the ORF on the tmRNA; the nascent peptide is terminated with the 'tag peptide' encoded by the tmRNA and targeted for degradation. The ribosome is freed to recommence translation, which seems to be the essential function of trans-translation. The polypeptide is SsrA-binding protein (Corynebacterium diphtheriae (strain ATCC 700971 / NCTC 13129 / Biotype gravis)).